The primary structure comprises 87 residues: Small ribosomal subunit protein bS20 (87 aa).

It belongs to the bacterial ribosomal protein bS20 family.

Its function is as follows. Binds directly to 16S ribosomal RNA. The chain is Small ribosomal subunit protein bS20 from Shigella flexneri.